Here is a 349-residue protein sequence, read N- to C-terminus: Magnesium-protoporphyrin IX monomethyl ester [oxidative] cyclase (349 aa).

It belongs to the AcsF family. The cofactor is Fe cation.

The protein localises to the plastid. It is found in the chloroplast. The catalysed reaction is Mg-protoporphyrin IX 13-monomethyl ester + 3 NADPH + 3 O2 + 2 H(+) = 3,8-divinyl protochlorophyllide a + 3 NADP(+) + 5 H2O. It functions in the pathway porphyrin-containing compound metabolism; chlorophyll biosynthesis (light-independent). Catalyzes the formation of the isocyclic ring in chlorophyll biosynthesis. Mediates the cyclase reaction, which results in the formation of divinylprotochlorophyllide (Pchlide) characteristic of all chlorophylls from magnesium-protoporphyrin IX 13-monomethyl ester (MgPMME). The chain is Magnesium-protoporphyrin IX monomethyl ester [oxidative] cyclase from Porphyra purpurea (Red seaweed).